The sequence spans 607 residues: Guanine nucleotide-binding protein-like 1 (607 aa).

Residues Met1–Lys14 show a composition bias toward basic residues. Positions Met1 to Tyr81 are disordered. Over residues Gln15–Leu26 the composition is skewed to basic and acidic residues. Ser32, Ser33, and Ser34 each carry phosphoserine. A phosphothreonine mark is found at Thr48 and Thr50. Phosphoserine occurs at positions 51 and 68. Residues Trp178 to Pro418 form the CP-type G domain. Asn225–Asp228 provides a ligand contact to GTP. The residue at position 324 (Ser324) is a Phosphoserine. Residues Gly367–Ser374 and Asp411–Leu415 contribute to the GTP site. Residues Gly544–Cys607 form a disordered region. Residues Gly550–Pro585 are compositionally biased toward acidic residues. Residues Ser561, Ser562, and Ser563 each carry the phosphoserine modification.

This sequence belongs to the TRAFAC class YlqF/YawG GTPase family.

Possible regulatory or functional link with the histocompatibility cluster. This is Guanine nucleotide-binding protein-like 1 (Gnl1) from Mus musculus (Mouse).